Reading from the N-terminus, the 486-residue chain is F420-non-reducing hydrogenase iron-sulfur subunit A (486 aa).

Residues Cys-61 and Cys-64 each contribute to the Ni(2+) site.

It belongs to the [NiFe]/[NiFeSe] hydrogenase large subunit family. The F420-non-reducing hydrogenase is composed of three subunits; MvhA, MvhD and MvhG. It forms a complex with the heterodisulfide reductase (Hdr). Ni(2+) is required as a cofactor.

It localises to the cytoplasm. In terms of biological role, part of a complex that provides reducing equivalents for heterodisulfide reductase. The chain is F420-non-reducing hydrogenase iron-sulfur subunit A (mvhA) from Archaeoglobus profundus (strain DSM 5631 / JCM 9629 / NBRC 100127 / Av18).